The following is a 184-amino-acid chain: Two-component response regulator ARR5 (184 aa).

A Response regulatory domain is found at 26–154 (HVLAVDDSMV…DVKRLRDSLM (129 aa)). Position 87 is a 4-aspartylphosphate (Asp87).

It belongs to the ARR family. Type-A subfamily. Post-translationally, two-component system major event consists of a His-to-Asp phosphorelay between a sensor histidine kinase (HK) and a response regulator (RR). In plants, the His-to-Asp phosphorelay involves an additional intermediate named Histidine-containing phosphotransfer protein (HPt). This multistep phosphorelay consists of a His-Asp-His-Asp sequential transfer of a phosphate group between first a His and an Asp of the HK protein, followed by the transfer to a conserved His of the HPt protein and finally the transfer to an Asp in the receiver domain of the RR protein. As to expression, predominantly expressed in roots and shoot apical meristems.

It is found in the nucleus. In terms of biological role, functions as a response regulator involved in His-to-Asp phosphorelay signal transduction system. Phosphorylation of the Asp residue in the receiver domain activates the ability of the protein to promote the transcription of target genes. Type-A response regulators seem to act as negative regulators of the cytokinin signaling. The sequence is that of Two-component response regulator ARR5 (ARR5) from Arabidopsis thaliana (Mouse-ear cress).